A 54-amino-acid polypeptide reads, in one-letter code: UPF0391 membrane protein Sde_0270 (54 aa).

2 helical membrane-spanning segments follow: residues Ile-6–Val-26 and Gly-29–Gly-49.

Belongs to the UPF0391 family.

Its subcellular location is the cell membrane. The chain is UPF0391 membrane protein Sde_0270 from Saccharophagus degradans (strain 2-40 / ATCC 43961 / DSM 17024).